Reading from the N-terminus, the 117-residue chain is Protein MGF 110-11L (117 aa).

A helical membrane pass occupies residues 3 to 23 (VFLGLLLGYSTILILTYQSPA). Residue asparagine 62 is glycosylated (N-linked (GlcNAc...) asparagine; by host). Helical transmembrane passes span 69–89 (YYCFYLVFSFAFAGCIAFAIC) and 94–114 (LCTTMKLLMLLSILVLLSQPI).

The protein belongs to the asfivirus MGF 110 family.

It is found in the host membrane. Functionally, plays a role in virus cell tropism, and may be required for efficient virus replication in macrophages. The protein is Protein MGF 110-11L of African swine fever virus (isolate Warthog/Namibia/Wart80/1980) (ASFV).